The following is a 543-amino-acid chain: Efflux pump mokI (543 aa).

The next 13 membrane-spanning stretches (helical) occupy residues 30–50, 90–110, 125–145, 153–173, 185–205, 233–253, 261–281, 307–327, 340–360, 364–384, 394–416, 428–448, and 509–529; these read LVVT…SIIV, LLTL…GSAL, AVAG…LASA, LLIG…PLLG, CFYI…AIHI, LLGF…LEWG, SSVI…FGFW, LFLG…PIYF, VYML…GAII, GYYI…AGLV, AAWV…TPII, ALGI…FLTL, and VGAS…GLIW.

Belongs to the major facilitator superfamily. TCR/Tet family.

It is found in the membrane. Its function is as follows. Efflux pump; part of the gene cluster that mediates the biosynthesis of monakolin K, also known as lovastatin, and which acts as a potent competitive inhibitor of HMG-CoA reductase. This Monascus pilosus (Red mold) protein is Efflux pump mokI.